Reading from the N-terminus, the 192-residue chain is 7-methyl-GTP pyrophosphatase (192 aa).

Asp69 (proton acceptor) is an active-site residue.

It belongs to the Maf family. YceF subfamily. A divalent metal cation is required as a cofactor.

Its subcellular location is the cytoplasm. It carries out the reaction N(7)-methyl-GTP + H2O = N(7)-methyl-GMP + diphosphate + H(+). Functionally, nucleoside triphosphate pyrophosphatase that hydrolyzes 7-methyl-GTP (m(7)GTP). May have a dual role in cell division arrest and in preventing the incorporation of modified nucleotides into cellular nucleic acids. In Pseudomonas fluorescens (strain Pf0-1), this protein is 7-methyl-GTP pyrophosphatase.